The sequence spans 117 residues: UPF0102 protein RSKD131_0118 (117 aa).

This sequence belongs to the UPF0102 family.

This chain is UPF0102 protein RSKD131_0118, found in Cereibacter sphaeroides (strain KD131 / KCTC 12085) (Rhodobacter sphaeroides).